The primary structure comprises 453 residues: Aldehyde dehydrogenase, dimeric NADP-preferring (453 aa).

S2 bears the N-acetylserine mark. K178 carries the N6-acetyllysine modification. 188-193 (GSTGVG) serves as a coordination point for NAD(+). At K194 the chain carries N6-acetyllysine. Residues E210 and C244 contribute to the active site.

Belongs to the aldehyde dehydrogenase family. As to quaternary structure, homodimer. High levels in stomach, esophagus and lung; low level in the liver and kidney.

The protein localises to the cytoplasm. It carries out the reaction an aldehyde + NAD(+) + H2O = a carboxylate + NADH + 2 H(+). It catalyses the reaction octanal + NAD(+) + H2O = octanoate + NADH + 2 H(+). Functionally, ALDHs play a major role in the detoxification of alcohol-derived acetaldehyde. They are involved in the metabolism of corticosteroids, biogenic amines, neurotransmitters, and lipid peroxidation. Oxidizes medium and long chain aldehydes into non-toxic fatty acids. Preferentially oxidizes aromatic aldehyde substrates. Comprises about 50 percent of corneal epithelial soluble proteins. May play a role in preventing corneal damage caused by ultraviolet light. The protein is Aldehyde dehydrogenase, dimeric NADP-preferring (ALDH3A1) of Homo sapiens (Human).